Reading from the N-terminus, the 355-residue chain is tRNA N6-adenosine threonylcarbamoyltransferase (355 aa).

His-111 and His-115 together coordinate Fe cation. Residues Leu-134–Gly-138, Asp-167, Gly-180, Asp-184, and Asn-279 each bind substrate. Asp-307 serves as a coordination point for Fe cation.

The protein belongs to the KAE1 / TsaD family. Fe(2+) is required as a cofactor.

The protein resides in the cytoplasm. It catalyses the reaction L-threonylcarbamoyladenylate + adenosine(37) in tRNA = N(6)-L-threonylcarbamoyladenosine(37) in tRNA + AMP + H(+). Its function is as follows. Required for the formation of a threonylcarbamoyl group on adenosine at position 37 (t(6)A37) in tRNAs that read codons beginning with adenine. Is involved in the transfer of the threonylcarbamoyl moiety of threonylcarbamoyl-AMP (TC-AMP) to the N6 group of A37, together with TsaE and TsaB. TsaD likely plays a direct catalytic role in this reaction. This chain is tRNA N6-adenosine threonylcarbamoyltransferase, found in Picosynechococcus sp. (strain ATCC 27264 / PCC 7002 / PR-6) (Agmenellum quadruplicatum).